Reading from the N-terminus, the 405-residue chain is Putative colanic acid polymerase (405 aa).

Helical transmembrane passes span Ile5 to Ala25, Leu27 to Leu47, Leu55 to Ser75, Tyr81 to Ile101, Phe117 to Ile137, Thr171 to Ile191, Met204 to Phe224, Pro244 to Ile264, Ile282 to Phe302, Gly327 to Met347, and Leu376 to Ile396.

Its subcellular location is the cell inner membrane. The protein operates within slime biogenesis; slime polysaccharide biosynthesis. This Escherichia coli (strain K12) protein is Putative colanic acid polymerase (wcaD).